Consider the following 423-residue polypeptide: Maltoporin 1 (423 aa).

A signal peptide spans 1 to 24 (MITLRKLPIALAVAAGVLSTQAMA).

Belongs to the porin LamB (TC 1.B.3) family. In terms of assembly, homotrimer formed of three 18-stranded antiparallel beta-barrels, containing three independent channels.

It localises to the cell outer membrane. It catalyses the reaction beta-maltose(in) = beta-maltose(out). Its function is as follows. Involved in the transport of maltose and maltodextrins. This is Maltoporin 1 from Yersinia pestis bv. Antiqua (strain Antiqua).